Consider the following 506-residue polypeptide: Chromosomal replication initiator protein DnaA (506 aa).

The domain I, interacts with DnaA modulators stretch occupies residues 1–87 (MSVELWQQCV…IGSRRSSAPR (87 aa)). Residues 87 to 169 (RAAPNAPVSA…QVEGALKHTS (83 aa)) form a domain II region. The segment at 135-154 (DSFDAMAEPAAAPPSGGGRA) is disordered. The span at 139-148 (AMAEPAAAPP) shows a compositional bias: low complexity. The segment at 170–386 (YLNRTFTFDT…GALKRVIAHS (217 aa)) is domain III, AAA+ region. 4 residues coordinate ATP: G214, G216, K217, and T218. A domain IV, binds dsDNA region spans residues 387–506 (HFMGRDITIE…YKNLLRTLTT (120 aa)).

This sequence belongs to the DnaA family. In terms of assembly, oligomerizes as a right-handed, spiral filament on DNA at oriC.

It is found in the cytoplasm. Plays an essential role in the initiation and regulation of chromosomal replication. ATP-DnaA binds to the origin of replication (oriC) to initiate formation of the DNA replication initiation complex once per cell cycle. Binds the DnaA box (a 9 base pair repeat at the origin) and separates the double-stranded (ds)DNA. Forms a right-handed helical filament on oriC DNA; dsDNA binds to the exterior of the filament while single-stranded (ss)DNA is stabiized in the filament's interior. The ATP-DnaA-oriC complex binds and stabilizes one strand of the AT-rich DNA unwinding element (DUE), permitting loading of DNA polymerase. After initiation quickly degrades to an ADP-DnaA complex that is not apt for DNA replication. Binds acidic phospholipids. Functionally, non-cooperatively binds DnaA boxes in the minimal plasmid RK2 replication origin (oriV). In vitro in the presence of plasmid RK2-derived TrfA and E.coli protein HU, forms an open complex at oriV. This complex was not however competent for formation of a pre-priming complex with E.coli DnaB and DnaC. Broad host range plasmid RK2 requires not only DnaA for replication but also TrfA and host factors. This Pseudomonas putida (strain ATCC 47054 / DSM 6125 / CFBP 8728 / NCIMB 11950 / KT2440) protein is Chromosomal replication initiator protein DnaA.